The primary structure comprises 200 residues: Recombination protein RecR (200 aa).

The C4-type zinc-finger motif lies at 58–73 (CSLCCNLTDEDPCSIC). Positions 81 to 176 (NLLCVVEEPR…KVTRIAHGIP (96 aa)) constitute a Toprim domain.

It belongs to the RecR family.

In terms of biological role, may play a role in DNA repair. It seems to be involved in an RecBC-independent recombinational process of DNA repair. It may act with RecF and RecO. The sequence is that of Recombination protein RecR from Desulforamulus reducens (strain ATCC BAA-1160 / DSM 100696 / MI-1) (Desulfotomaculum reducens).